Here is an 89-residue protein sequence, read N- to C-terminus: Small ribosomal subunit protein uS15 (89 aa).

Belongs to the universal ribosomal protein uS15 family. In terms of assembly, part of the 30S ribosomal subunit. Forms a bridge to the 50S subunit in the 70S ribosome, contacting the 23S rRNA.

In terms of biological role, one of the primary rRNA binding proteins, it binds directly to 16S rRNA where it helps nucleate assembly of the platform of the 30S subunit by binding and bridging several RNA helices of the 16S rRNA. Its function is as follows. Forms an intersubunit bridge (bridge B4) with the 23S rRNA of the 50S subunit in the ribosome. The sequence is that of Small ribosomal subunit protein uS15 from Elusimicrobium minutum (strain Pei191).